The following is a 538-amino-acid chain: NAD(P)H-quinone oxidoreductase chain 4 (538 aa).

14 consecutive transmembrane segments (helical) span residues 11 to 31 (FPWLSLSILFPIVGALIVPFI), 43 to 63 (YALIISLITFLITVAAYFKGF), 95 to 115 (MPLILLTSFITSLAVLAAWPV), 119 to 139 (PKLFFFLILAMDGGQIAVFAV), 143 to 163 (LLFFLAWELELFPVYLFLAIW), 175 to 195 (FIIYTAGSSLFILLAGLAMGF), 217 to 237 (GFQLLCYSGLLIAFGVKLPIV), 251 to 271 (TAPVHMLLAGILLKMGGYALL), 285 to 305 (FAPLLIVLGVVNIIYAALTSF), 314 to 334 (IAYSSISHMGFVLIGIGSFSS), 340 to 360 (AMLQMVSHGLIGASLFFLVGA), 382 to 404 (IMFALWTACAFASLALPGMSGFI), 425 to 445 (IVVASLAAIGVILTPIYLLSM), and 472 to 492 (IYIIACLLVPIIGIGLYPKIM).

Belongs to the complex I subunit 4 family.

The protein localises to the cellular thylakoid membrane. It carries out the reaction a plastoquinone + NADH + (n+1) H(+)(in) = a plastoquinol + NAD(+) + n H(+)(out). The catalysed reaction is a plastoquinone + NADPH + (n+1) H(+)(in) = a plastoquinol + NADP(+) + n H(+)(out). Functionally, NDH-1 shuttles electrons from NAD(P)H, via FMN and iron-sulfur (Fe-S) centers, to quinones in the respiratory chain. The immediate electron acceptor for the enzyme in this species is believed to be plastoquinone. Couples the redox reaction to proton translocation (for every two electrons transferred, four hydrogen ions are translocated across the cytoplasmic membrane), and thus conserves the redox energy in a proton gradient. The sequence is that of NAD(P)H-quinone oxidoreductase chain 4 from Prochlorococcus marinus (strain NATL1A).